We begin with the raw amino-acid sequence, 463 residues long: Putative protein FAM90A2P (463 aa).

Disordered regions lie at residues 1 to 42 (MTAR…DPRL), 67 to 115 (ALVP…PQRK), 150 to 295 (MPVH…PAQA), and 326 to 365 (ALEN…PPHS). 3 stretches are compositionally biased toward basic and acidic residues: residues 74-83 (GKKEGKENLK), 97-114 (NKDK…DPQR), and 159-170 (PCVDPELADRSA). Residues 180–198 (LASLSPLRKASLRSSSSLG) are compositionally biased toward low complexity.

This sequence belongs to the FAM90 family.

The polypeptide is Putative protein FAM90A2P (FAM90A2P) (Homo sapiens (Human)).